A 125-amino-acid polypeptide reads, in one-letter code: Large ribosomal subunit protein bL20 (125 aa).

Belongs to the bacterial ribosomal protein bL20 family.

Binds directly to 23S ribosomal RNA and is necessary for the in vitro assembly process of the 50S ribosomal subunit. It is not involved in the protein synthesizing functions of that subunit. In Methylobacterium sp. (strain 4-46), this protein is Large ribosomal subunit protein bL20.